The sequence spans 691 residues: Cyclic nucleotide-gated channel alpha-1 (691 aa).

At 1–168 (MKKNIINTWY…PAGNMYYNWL (168 aa)) the chain is on the cytoplasmic side. A disordered region spans residues 31 to 151 (ENGARSSFSD…KGKDKKEEEK (121 aa)). The span at 39–56 (SDDDGDDDSASMFEESEN) shows a compositional bias: acidic residues. Basic and acidic residues-rich tracts occupy residues 57-76 (ETPH…DPSQ) and 112-151 (SKSG…EEEK). The chain crosses the membrane as a helical span at residues 169–190 (FCITLPVMYNWTMVIARACFDE). Residues 191 to 200 (LQSDYLEYWI) lie on the Extracellular side of the membrane. The helical transmembrane segment at 201 to 221 (IFDYLSDIVYLLDMFVRTRTG) threads the bilayer. Topologically, residues 222–246 (YLEQGLLVREEAKLIEKYKSNLQFK) are cytoplasmic. A helical transmembrane segment spans residues 247–265 (LDFLSVIPTDLLYFKLGWN). Over 266–270 (YPEIR) the chain is Extracellular. A helical transmembrane segment spans residues 271–289 (LNRLLRISRMFEFFQRTET). Over 290-296 (RTNYPNI) the chain is Cytoplasmic. The interval 294–402 (PNIFRISNLV…GNIGSMISNM (109 aa)) is ion conduction pathway. The chain crosses the membrane as a helical span at residues 297 to 320 (FRISNLVMYIVIIIHWNACVYFSI). At 321 to 343 (SKAIGFGNDTWVYPDVNDPEFGR) the chain is on the extracellular side. N-linked (GlcNAc...) asparagine glycosylation is present at Asn-328. Helical transmembrane passes span 344–378 (LARK…VFVV) and 379–403 (VDFL…SNMN). The selectivity filter stretch occupies residues 361–364 (TIGE). A C-linker region spans residues 404 to 480 (AARAEFQARI…DTLKKVRIFA (77 aa)). Residues 404–691 (AARAEFQARI…ESRPLDSTQD (288 aa)) lie on the Cytoplasmic side of the membrane. The interval 484 to 604 (AGLLVELVLK…EEKGKQILMK (121 aa)) is cyclic nucleotide-binding domain. Residues Gly-544, Ser-547, Arg-560, and Thr-561 each contribute to the 3',5'-cyclic GMP site. Residues Arg-560 and Thr-561 each coordinate 3',5'-cyclic AMP. Positions 622–676 (LEEKVTRMEGSVDLLQTRFARILAEYESMQQKLKQRLTKVERFLKPIIDTEFSAL) form a coiled coil.

Belongs to the cyclic nucleotide-gated cation channel (TC 1.A.1.5) family. CNGA1 subfamily. Forms heterotetrameric channels composed of CNGA1 and CNGB1 subunits with 3:1 stoichiometry. May also form cyclic nucleotide-activated homotetrameric channels, that are efficiently activated by saturating cGMP, but poorly activated by saturating cAMP compared to the heterotetramer with CNGB1. The channel binds Ca(2+)-bound CALM1 via CaM1 and CaM2 regions of the CNGB1 subunit; this interaction modulates the affinity of the channel for cNMPs in response to intracellular Ca(2+) levels.

Its subcellular location is the cell membrane. It carries out the reaction Ca(2+)(in) = Ca(2+)(out). The enzyme catalyses Na(+)(in) = Na(+)(out). It catalyses the reaction K(+)(in) = K(+)(out). The catalysed reaction is NH4(+)(in) = NH4(+)(out). It carries out the reaction Rb(+)(in) = Rb(+)(out). The enzyme catalyses Li(+)(in) = Li(+)(out). It catalyses the reaction Cs(+)(in) = Cs(+)(out). In terms of biological role, pore-forming subunit of the rod cyclic nucleotide-gated channel. Mediates rod photoresponses at dim light converting transient changes in intracellular cGMP levels into electrical signals. In the dark, cGMP levels are high and keep the channel open enabling a steady inward current carried by Na(+) and Ca(2+) ions that leads to membrane depolarization and neurotransmitter release from synaptic terminals. Upon photon absorption cGMP levels decline leading to channel closure and membrane hyperpolarization that ultimately slows neurotransmitter release and signals the presence of light, the end point of the phototransduction cascade. Conducts cGMP- and cAMP-gated ion currents, with permeability for monovalent and divalent cations. The selectivity for Ca(2+) over Na(+) increases with cGMP concentrations, whereas the selectivity among monovalent ions is independent of the cGMP levels. The sequence is that of Cyclic nucleotide-gated channel alpha-1 from Canis lupus familiaris (Dog).